We begin with the raw amino-acid sequence, 433 residues long: Serine--tRNA ligase (433 aa).

L-serine is bound at residue 235–237 (TSE). 266–268 (RSE) is a binding site for ATP. E289 is a binding site for L-serine. 353-356 (EISS) lines the ATP pocket. Position 388 (S388) interacts with L-serine.

It belongs to the class-II aminoacyl-tRNA synthetase family. Type-1 seryl-tRNA synthetase subfamily. In terms of assembly, homodimer. The tRNA molecule binds across the dimer.

Its subcellular location is the cytoplasm. The enzyme catalyses tRNA(Ser) + L-serine + ATP = L-seryl-tRNA(Ser) + AMP + diphosphate + H(+). It catalyses the reaction tRNA(Sec) + L-serine + ATP = L-seryl-tRNA(Sec) + AMP + diphosphate + H(+). It participates in aminoacyl-tRNA biosynthesis; selenocysteinyl-tRNA(Sec) biosynthesis; L-seryl-tRNA(Sec) from L-serine and tRNA(Sec): step 1/1. Functionally, catalyzes the attachment of serine to tRNA(Ser). Is also able to aminoacylate tRNA(Sec) with serine, to form the misacylated tRNA L-seryl-tRNA(Sec), which will be further converted into selenocysteinyl-tRNA(Sec). In Burkholderia pseudomallei (strain 1106a), this protein is Serine--tRNA ligase.